Reading from the N-terminus, the 371-residue chain is Putative transport protein YtvI (371 aa).

A run of 9 helical transmembrane segments spans residues Ile6 to Ala26, Phe30 to Val50, Val65 to Ala85, Phe168 to Phe188, Gly225 to Leu245, Ile256 to Val276, Ser283 to Ile303, Ile312 to Phe332, and Leu334 to Ile354.

The protein belongs to the autoinducer-2 exporter (AI-2E) (TC 2.A.86) family.

The protein resides in the cell membrane. In Bacillus subtilis (strain 168), this protein is Putative transport protein YtvI (ytvI).